A 316-amino-acid polypeptide reads, in one-letter code: MNDVSKASLPKAIFLMGPTASGKTALAIELRKVLPVELISVDSALIYRGMDIGTAKPSADELKAAPHRLLNIRDPSQAYSAADFRRDALAQMAEITAAGRIPLLVGGTMLYFKALLEGLSPLPSADPEVRSRIEQQAAELGWELLHQQLQEIDPVAAARIHPNDPQRLSRALEVFFISGKTLTELTQTSGDALPYQVHQFAIAPASRELLHQRIELRFHQMLASGFEAEVRALFARGDLHTDLPSIRCVGYRQMWSYIEGEISYDEMVYRGVCATRQLAKRQMTWLRGWEGVRWLDSENPDRARKEVLQVVGAIAD.

G17–T24 is an ATP binding site. A substrate-binding site is contributed by T19–T24. 3 interaction with substrate tRNA regions span residues D42 to L45, Q166 to R170, and R247 to R252.

This sequence belongs to the IPP transferase family. As to quaternary structure, monomer. Mg(2+) serves as cofactor.

The enzyme catalyses adenosine(37) in tRNA + dimethylallyl diphosphate = N(6)-dimethylallyladenosine(37) in tRNA + diphosphate. Its function is as follows. Catalyzes the transfer of a dimethylallyl group onto the adenine at position 37 in tRNAs that read codons beginning with uridine, leading to the formation of N6-(dimethylallyl)adenosine (i(6)A). The sequence is that of tRNA dimethylallyltransferase from Salmonella arizonae (strain ATCC BAA-731 / CDC346-86 / RSK2980).